The chain runs to 166 residues: NAD(P)H-quinone oxidoreductase subunit I, chloroplastic (166 aa).

2 4Fe-4S ferredoxin-type domains span residues 55–84 and 95–124; these read GRIHFEFDKCIACEVCVRVCPIDLPVVDWK and LNYSIDFGICIFCGNCVEYCPTNCLSMTEE. Cys64, Cys67, Cys70, Cys74, Cys104, Cys107, Cys110, and Cys114 together coordinate [4Fe-4S] cluster.

The protein belongs to the complex I 23 kDa subunit family. NDH is composed of at least 16 different subunits, 5 of which are encoded in the nucleus. It depends on [4Fe-4S] cluster as a cofactor.

It localises to the plastid. Its subcellular location is the chloroplast thylakoid membrane. The catalysed reaction is a plastoquinone + NADH + (n+1) H(+)(in) = a plastoquinol + NAD(+) + n H(+)(out). It carries out the reaction a plastoquinone + NADPH + (n+1) H(+)(in) = a plastoquinol + NADP(+) + n H(+)(out). Functionally, NDH shuttles electrons from NAD(P)H:plastoquinone, via FMN and iron-sulfur (Fe-S) centers, to quinones in the photosynthetic chain and possibly in a chloroplast respiratory chain. The immediate electron acceptor for the enzyme in this species is believed to be plastoquinone. Couples the redox reaction to proton translocation, and thus conserves the redox energy in a proton gradient. This Oblivia mikanioides (Salmea mikanioides) protein is NAD(P)H-quinone oxidoreductase subunit I, chloroplastic.